Reading from the N-terminus, the 119-residue chain is V-type proton ATPase subunit F (119 aa).

Belongs to the V-ATPase F subunit family. In terms of assembly, V-ATPase is a heteromultimeric enzyme composed of a peripheral catalytic V1 complex (components A to H) attached to an integral membrane V0 proton pore complex (components: a, c, c', c'', d, e, f and VOA1).

Its subcellular location is the vacuole membrane. Functionally, subunit of the V1 complex of vacuolar(H+)-ATPase (V-ATPase), a multisubunit enzyme composed of a peripheral complex (V1) that hydrolyzes ATP and a membrane integral complex (V0) that translocates protons. V-ATPase is responsible for acidifying and maintaining the pH of intracellular compartments. The polypeptide is V-type proton ATPase subunit F (VMA7) (Vanderwaltozyma polyspora (strain ATCC 22028 / DSM 70294 / BCRC 21397 / CBS 2163 / NBRC 10782 / NRRL Y-8283 / UCD 57-17) (Kluyveromyces polysporus)).